Reading from the N-terminus, the 198-residue chain is Probable chemoreceptor glutamine deamidase CheD (198 aa).

It belongs to the CheD family.

The catalysed reaction is L-glutaminyl-[protein] + H2O = L-glutamyl-[protein] + NH4(+). Probably deamidates glutamine residues to glutamate on methyl-accepting chemotaxis receptors (MCPs), playing an important role in chemotaxis. This chain is Probable chemoreceptor glutamine deamidase CheD, found in Xanthomonas axonopodis pv. citri (strain 306).